The primary structure comprises 833 residues: Urease (833 aa).

Residues 395-833 enclose the Urease domain; sequence GALDVHVHYI…LPLTKRYFVY (439 aa). Positions 400 and 402 each coordinate Ni(2+). Residues His-402 and Ala-433 each contribute to the urea site. Lys-483 contributes to the Ni(2+) binding site. The residue at position 483 (Lys-483) is an N6-carboxylysine. Urea is bound by residues His-485 and His-512. Positions 512 and 538 each coordinate Ni(2+). His-586 serves as the catalytic Proton donor. Asp-626 lines the Ni(2+) pocket. Ala-629 contributes to the urea binding site.

The protein in the C-terminal section; belongs to the metallo-dependent hydrolases superfamily. Urease alpha subunit family. Homohexamer. It depends on Ni(2+) as a cofactor. In terms of processing, carboxylation allows a single lysine to coordinate two nickel ions.

The enzyme catalyses urea + 2 H2O + H(+) = hydrogencarbonate + 2 NH4(+). It participates in nitrogen metabolism; urea degradation; CO(2) and NH(3) from urea (urease route): step 1/1. The urease accessory proteins URE4, URE6 and URE7 are required for urease activity, URE7 supplying nickel for the functional urease. Plays a nutritional role via nitrogen acquisition in the environment. Contributes to the central nervous system invasion by enhancing yeast sequestration within microcapillary beds (such as within the brain) during hematogenous spread, thereby facilitating blood-to-brain invasion by C.neoformans. Affects fitness within the mammalian phagosome, promoting non-lytic exocytosis while delaying intracellular replication and thus reducing phagolysosomal membrane damage, events that could facilitate cryptococcal dissemination when transported inside macrophages. Urease activity is also associated with the regulation of key intracellular metabolic pathways, including melanin biosynthesis, polyamine biosynthesis, as well as intracellular levels of proline and reactive oxygen species. The sequence is that of Urease from Cryptococcus neoformans var. neoformans serotype D (strain B-3501A) (Filobasidiella neoformans).